A 615-amino-acid chain; its full sequence is MAEKFAETTFTDPARIRNFCIIAHIDHGKSTLADRILQLSNVVDARDMRDQYLDNMDIERERGITIKAQNVRLPWIPRSGEYEGQQIVMQMIDTPGHVDFTYEVSRALEACEGAILLVDAAQGIEAQTLANLYLAMENDLEIIPVLNKIDLPAADPDKYALEIANIVGCEPEDVLRVSGKTGMGVPELLDKVVELIPAPTSEFEEDAPARAMIFDSVYDTYRGVVTYIRMMDGKLTPRQKIKMMSTGATHELLEIGIVSPTPKKCVGLGPGEVGYLITGVKDVRQSKVGDTVTWAIHGAEQPLRGYQEPTPMVYSGLFPISQADFPDLRDALEKLQLNDASLTYEPETSVALGFGFRCGFLGLLHMEITRDRLEREFGLDLISTAPSVNYRVIDEAGKEFRVHNPSDWPGGKLSEVYEPIVKVTIIVPSEFVGPTMELCQTKRGQMGGMDYLSEDRVELRYTMPLGEIIFDFFDMLKSRTKGYASLNYEEAGEQTADLVKVDILLQGEPVDAFSAIVHRDNAQWYGNKMTVKLKELIPRQQFEVPVQAAIGSKVIARENIRALRKDVLAKCYGGDISRKRKLLEKQKAGKKRMKNIGSVEVPQEAFVAALSTDEA.

The region spanning 14–200 is the tr-type G domain; the sequence is ARIRNFCIIA…KVVELIPAPT (187 aa). Residues 26-31 and 147-150 each bind GTP; these read DHGKST and NKID.

It belongs to the TRAFAC class translation factor GTPase superfamily. Classic translation factor GTPase family. LepA subfamily.

Its subcellular location is the cell membrane. The catalysed reaction is GTP + H2O = GDP + phosphate + H(+). In terms of biological role, required for accurate and efficient protein synthesis under certain stress conditions. May act as a fidelity factor of the translation reaction, by catalyzing a one-codon backward translocation of tRNAs on improperly translocated ribosomes. Back-translocation proceeds from a post-translocation (POST) complex to a pre-translocation (PRE) complex, thus giving elongation factor G a second chance to translocate the tRNAs correctly. Binds to ribosomes in a GTP-dependent manner. The protein is Elongation factor 4 of Corynebacterium glutamicum (strain ATCC 13032 / DSM 20300 / JCM 1318 / BCRC 11384 / CCUG 27702 / LMG 3730 / NBRC 12168 / NCIMB 10025 / NRRL B-2784 / 534).